The sequence spans 1523 residues: MAPGRTGAGAAVRARLALALALASILSGPPAAACPTKCTCSAASVDCHGLGLRAVPRGIPRNAERLDLDRNNITRITKMDFTGLKNLRVLHLEDNQVSVIERGAFQDLKQLERLRLNKNKLQVLPELLFQSTPKLTRLDLSENQIQGIPRKAFRGVTGVKNLQLDNNHISCIEDGAFRALRDLEILTLNNNNISRILVTSFNHMPKIRTLRLHSNHLYCDCHLAWLSDWLRQRRTIGQFTLCMAPVHLRGFSVADVQKKEYVCPGPHSEAPACNANSLSCPSACSCSNNIVDCRGKGLTEIPANLPEGIVEIRLEQNSIKSIPAGAFIQYKKLKRIDISKNQISDIAPDAFQGLKSLTSLVLYGNKITEIPKGLFDGLVSLQLLLLNANKINCLRVNTFQDLQNLNLLSLYDNKLQTISKGLFAPLQSIQTLHLAQNPFVCDCHLKWLADYLQDNPIETSGARCSSPRRLANKRISQIKSKKFRCSGSEDYRNRFSSECFMDLVCPEKCRCEGTIVDCSNQKLSRIPSHLPEYTTDLRLNDNDIAVLEATGIFKKLPNLRKINLSNNRIKEVREGAFDGAAGVQELMLTGNQLETMHGRMFRGLSGLKTLMLRSNLISCVNNDTFAGLSSVRLLSLYDNRITTISPGAFTTLVSLSTINLLSNPFNCNCHMAWLGRWLRKRRIVSGNPRCQKPFFLKEIPIQDVAIQDFTCEGNEENSCQLSPRCPEQCTCVETVVRCSNRGLHTLPKGMPKDVTELYLEGNHLTAVPKELSTFRQLTLIDLSNNSISMLTNHTFSNMSHLSTLILSYNRLRCIPVHAFNGLRSLRVLTLHGNDISSVPEGSFNDLTSLSHLALGINPLHCDCSLRWLSEWIKAGYKEPGIARCSSPESMADRLLLTTPTHRFQCKGPVDINIVAKCNACLSSPCKNNGTCSQDPVEQYRCTCPYSYKGKDCTVPINTCVQNPCQHGGTCHLSESHRDGFSCSCPLGFEGQRCEINPDDCEDNDCENSATCVDGINNYACVCPPNYTGELCDEVIDYCVPEMNLCQHEAKCISLDKGFRCECVPGYSGKLCETDNDDCVAHKCRHGAQCVDAVNGYTCICPQGFSGLFCEHPPPMVLLQTSPCDQYECQNGAQCIVVQQEPTCRCPPGFAGPRCEKLITVNFVGKDSYVELASAKVRPQANISLQVATDKDNGILLYKGDNDPLALELYQGHVRLVYDSLSSPPTTVYSVETVNDGQFHSVELVMLNQTLNLVVDKGAPKSLGKLQKQPAVGINSPLYLGGIPTSTGLSALRQGADRPLGGFHGCIHEVRINNELQDFKALPPQSLGVSPGCKSCTVCRHGLCRSVEKDSVVCECHPGWTGPLCDQEAQDPCLGHSCSHGTCVATGNSYVCKCAEGYEGPLCDQKNDSANACSAFKCHHGQCHISDRGEPYCLCQPGFSGNHCEQENPCLGEIVREAIRRQKDYASCATASKVPIMVCRGGCGSQCCQPIRSKRRKYVFQCTDGSSFVEEVERHLECGCRECS.

Residues 1-33 (MAPGRTGAGAAVRARLALALALASILSGPPAAA) form the signal peptide. In terms of domain architecture, LRRNT spans 34–61 (CPTKCTCSAASVDCHGLGLRAVPRGIPR). 6 LRR repeats span residues 62–83 (NAERLDLDRNNITRITKMDFTG), 86–107 (NLRVLHLEDNQVSVIERGAFQD), 110–131 (QLERLRLNKNKLQVLPELLFQS), 134–155 (KLTRLDLSENQIQGIPRKAFRG), 158–179 (GVKNLQLDNNHISCIEDGAFRA), and 182–203 (DLEILTLNNNNISRILVTSFNH). Asparagine 72 carries an N-linked (GlcNAc...) asparagine glycan. N-linked (GlcNAc...) asparagine glycosylation occurs at asparagine 192. In terms of domain architecture, LRRCT 1 spans 215 to 265 (NHLYCDCHLAWLSDWLRQRRTIGQFTLCMAPVHLRGFSVADVQKKEYVCPG). The LRRNT 2 domain maps to 271 to 307 (PACNANSLSCPSACSCSNNIVDCRGKGLTEIPANLPE). A disulfide bridge links cysteine 284 with cysteine 293. LRR repeat units follow at residues 308-329 (GIVEIRLEQNSIKSIPAGAFIQ), 332-353 (KLKRIDISKNQISDIAPDAFQG), 356-377 (SLTSLVLYGNKITEIPKGLFDG), 380-401 (SLQLLLLNANKINCLRVNTFQD), and 404-425 (NLNLLSLYDNKLQTISKGLFAP). The region spanning 437 to 487 (NPFVCDCHLKWLADYLQDNPIETSGARCSSPRRLANKRISQIKSKKFRCSG) is the LRRCT 2 domain. 4 disulfide bridges follow: cysteine 441/cysteine 464, cysteine 443/cysteine 485, cysteine 505/cysteine 511, and cysteine 509/cysteine 518. The 37-residue stretch at 496–532 (SSECFMDLVCPEKCRCEGTIVDCSNQKLSRIPSHLPE) folds into the LRRNT 3 domain. 5 LRR repeats span residues 533 to 554 (YTTDLRLNDNDIAVLEATGIFK), 558 to 579 (NLRKINLSNNRIKEVREGAFDG), 582 to 603 (GVQELMLTGNQLETMHGRMFRG), 606 to 627 (GLKTLMLRSNLISCVNNDTFAG), and 630 to 651 (SVRLLSLYDNRITTISPGAFTT). A glycan (N-linked (GlcNAc...) asparagine) is linked at asparagine 563. The N-linked (GlcNAc...) asparagine glycan is linked to asparagine 622. An LRRCT 3 domain is found at 663 to 713 (NPFNCNCHMAWLGRWLRKRRIVSGNPRCQKPFFLKEIPIQDVAIQDFTCEG). Cystine bridges form between cysteine 667–cysteine 690 and cysteine 669–cysteine 711. An LRRNT 4 domain is found at 716–752 (ENSCQLSPRCPEQCTCVETVVRCSNRGLHTLPKGMPK). LRR repeat units lie at residues 753 to 774 (DVTELYLEGNHLTAVPKELSTF), 776 to 797 (QLTLIDLSNNSISMLTNHTFSN), 800 to 821 (HLSTLILSYNRLRCIPVHAFNG), and 824 to 845 (SLRVLTLHGNDISSVPEGSFND). 3 N-linked (GlcNAc...) asparagine glycosylation sites follow: asparagine 784, asparagine 792, and asparagine 797. Residues 857–907 (NPLHCDCSLRWLSEWIKAGYKEPGIARCSSPESMADRLLLTTPTHRFQCKG) enclose the LRRCT 4 domain. EGF-like domains lie at 918–953 (NACLSSPCKNNGTCSQDPVEQYRCTCPYSYKGKDCT), 955–994 (PINTCVQNPCQHGGTCHLSESHRDGFSCSCPLGFEGQRCE), 996–1032 (NPDDCEDNDCENSATCVDGINNYACVCPPNYTGELCD), 1034–1072 (VIDYCVPEMNLCQHEAKCISLDKGFRCECVPGYSGKLCE), 1074–1110 (DNDDCVAHKCRHGAQCVDAVNGYTCICPQGFSGLFCE), and 1119–1155 (QTSPCDQYECQNGAQCIVVQQEPTCRCPPGFAGPRCE). Disulfide bonds link cysteine 920/cysteine 931, cysteine 925/cysteine 941, cysteine 943/cysteine 952, cysteine 959/cysteine 970, cysteine 964/cysteine 982, cysteine 984/cysteine 993, cysteine 1000/cysteine 1011, cysteine 1005/cysteine 1020, cysteine 1022/cysteine 1031, cysteine 1038/cysteine 1051, cysteine 1045/cysteine 1060, cysteine 1062/cysteine 1071, cysteine 1078/cysteine 1089, cysteine 1083/cysteine 1098, cysteine 1100/cysteine 1109, cysteine 1123/cysteine 1134, cysteine 1128/cysteine 1143, and cysteine 1145/cysteine 1154. Asparagine 928 carries N-linked (GlcNAc...) asparagine glycosylation. Asparagine 1025 carries an N-linked (GlcNAc...) asparagine glycan. A Laminin G-like domain is found at 1158-1332 (ITVNFVGKDS…PQSLGVSPGC (175 aa)). N-linked (GlcNAc...) asparagine glycosylation is found at asparagine 1181 and asparagine 1247. 5 cysteine pairs are disulfide-bonded: cysteine 1305–cysteine 1332, cysteine 1355–cysteine 1364, cysteine 1372–cysteine 1382, cysteine 1377–cysteine 1391, and cysteine 1393–cysteine 1402. 2 consecutive EGF-like domains span residues 1340–1365 (HGLCRSVEKDSVVCECHPGWTGPLCD) and 1368–1403 (AQDPCLGHSCSHGTCVATGNSYVCKCAEGYEGPLCD). N-linked (GlcNAc...) asparagine glycosylation occurs at asparagine 1406. One can recognise an EGF-like 9 domain in the interval 1408–1444 (SANACSAFKCHHGQCHISDRGEPYCLCQPGFSGNHCE). 7 cysteine pairs are disulfide-bonded: cysteine 1412–cysteine 1422, cysteine 1417–cysteine 1432, cysteine 1434–cysteine 1443, cysteine 1449–cysteine 1487, cysteine 1467–cysteine 1501, cysteine 1478–cysteine 1517, and cysteine 1482–cysteine 1519. The 75-residue stretch at 1449-1523 (CLGEIVREAI…HLECGCRECS (75 aa)) folds into the CTCK domain.

Its subcellular location is the secreted. May act as molecular guidance cue in cellular migration, and function may be mediated by interaction with roundabout homolog receptors. This is Slit homolog 3 protein (Slit3) from Rattus norvegicus (Rat).